Consider the following 463-residue polypeptide: Asparagine--tRNA ligase (463 aa).

The protein belongs to the class-II aminoacyl-tRNA synthetase family. Homodimer.

Its subcellular location is the cytoplasm. The catalysed reaction is tRNA(Asn) + L-asparagine + ATP = L-asparaginyl-tRNA(Asn) + AMP + diphosphate + H(+). This Bacillus cereus (strain ATCC 10987 / NRS 248) protein is Asparagine--tRNA ligase.